A 335-amino-acid polypeptide reads, in one-letter code: Methionine import ATP-binding protein MetN 2 (335 aa).

An ABC transporter domain is found at 2–242 (IEFQNVHKTY…PEHPTTKRFV (241 aa)). An ATP-binding site is contributed by 38–45 (GHSGAGKS).

This sequence belongs to the ABC transporter superfamily. Methionine importer (TC 3.A.1.24) family. In terms of assembly, the complex is composed of two ATP-binding proteins (MetN), two transmembrane proteins (MetI) and a solute-binding protein (MetQ).

It is found in the cell inner membrane. It carries out the reaction L-methionine(out) + ATP + H2O = L-methionine(in) + ADP + phosphate + H(+). It catalyses the reaction D-methionine(out) + ATP + H2O = D-methionine(in) + ADP + phosphate + H(+). Functionally, part of the ABC transporter complex MetNIQ involved in methionine import. Responsible for energy coupling to the transport system. This is Methionine import ATP-binding protein MetN 2 from Pseudomonas entomophila (strain L48).